We begin with the raw amino-acid sequence, 119 residues long: Immunoglobulin heavy variable 2-70 (119 aa).

An N-terminal signal peptide occupies residues 1 to 19 (MDILCSTLLLLTVPSWVLS). Glutamine 20 is subject to Pyrrolidone carboxylic acid. The segment at 20 to 44 (QVTLRESGPALVKPTQTLTLTCTFS) is framework-1. Residues 20–119 (QVTLRESGPA…DTATYYCARI (100 aa)) enclose the Ig-like domain. The cysteines at positions 41 and 116 are disulfide-linked. The segment at 45–54 (GFSLSTSGMC) is complementarity-determining-1. The tract at residues 55 to 71 (VSWIRQPPGKALEWLAL) is framework-2. The interval 72 to 78 (IDWDDDK) is complementarity-determining-2. Residues 79–116 (YYSTSLKTRLTISKDTSKNQVVLTMTNMDPVDTATYYC) form a framework-3 region. The segment at 117–119 (ARI) is complementarity-determining-3.

As to quaternary structure, immunoglobulins are composed of two identical heavy chains and two identical light chains; disulfide-linked.

It localises to the secreted. Its subcellular location is the cell membrane. In terms of biological role, v region of the variable domain of immunoglobulin heavy chains that participates in the antigen recognition. Immunoglobulins, also known as antibodies, are membrane-bound or secreted glycoproteins produced by B lymphocytes. In the recognition phase of humoral immunity, the membrane-bound immunoglobulins serve as receptors which, upon binding of a specific antigen, trigger the clonal expansion and differentiation of B lymphocytes into immunoglobulins-secreting plasma cells. Secreted immunoglobulins mediate the effector phase of humoral immunity, which results in the elimination of bound antigens. The antigen binding site is formed by the variable domain of one heavy chain, together with that of its associated light chain. Thus, each immunoglobulin has two antigen binding sites with remarkable affinity for a particular antigen. The variable domains are assembled by a process called V-(D)-J rearrangement and can then be subjected to somatic hypermutations which, after exposure to antigen and selection, allow affinity maturation for a particular antigen. The protein is Immunoglobulin heavy variable 2-70 of Homo sapiens (Human).